A 1006-amino-acid chain; its full sequence is Unconventional myosin-Id (1006 aa).

A2 is subject to N-acetylalanine. The 687-residue stretch at 9–695 folds into the Myosin motor domain; the sequence is FGKADFVLMD…TLFTLEELRA (687 aa). 102–109 provides a ligand contact to ATP; that stretch reads GESGAGKT. S200 carries the phosphoserine modification. Y536 is subject to Phosphotyrosine. The tract at residues 572-594 is actin-binding; that stretch reads MIALVDNLASKEPYYVRCIKPND. IQ domains lie at 699 to 719 and 721 to 741; these read IRIV…MRYK and TKAA…SYIH. The region spanning 812-1005 is the TH1 domain; it reads GQRADLGLQR…RSGFILSVPG (194 aa).

Belongs to the TRAFAC class myosin-kinesin ATPase superfamily. Myosin family. In terms of assembly, interacts (via the two IQ motifs) with calmodulin. Binds an additional calmodulin chain via a third, C-terminal region. Interacts with F-actin. In terms of tissue distribution, expressed in many tissues. Highest levels in brain, followed by lung and ovary; expression is lowest in spleen.

It is found in the cytoplasm. It localises to the perikaryon. The protein resides in the cell projection. Its subcellular location is the dendrite. The protein localises to the early endosome. It is found in the cell cortex. In terms of biological role, unconventional myosin that functions as actin-based motor protein with ATPase activity. Plays a role in endosomal protein trafficking, and especially in the transfer of cargo proteins from early to recycling endosomes. Required for normal planar cell polarity in ciliated tracheal cells, for normal rotational polarity of cilia, and for coordinated, unidirectional ciliary movement in the trachea. Required for normal, polarized cilia organization in brain ependymal epithelial cells. This Homo sapiens (Human) protein is Unconventional myosin-Id (MYO1D).